Reading from the N-terminus, the 125-residue chain is MRHYEIVFMVHPDQSEQVPGMIERYTGSVKEAGGQIHRLEDWGRRQLAYPINKLHKAHYVLMNVEAPQEVIDELETTFRYNDAVLRNVIIRTKHAVTEASPMVKAKDERRASAEVENNDFEDAEE.

The disordered stretch occupies residues 99-125 (ASPMVKAKDERRASAEVENNDFEDAEE). Positions 104–113 (KAKDERRASA) are enriched in basic and acidic residues. The segment covering 116-125 (ENNDFEDAEE) has biased composition (acidic residues).

It belongs to the bacterial ribosomal protein bS6 family.

Functionally, binds together with bS18 to 16S ribosomal RNA. The chain is Small ribosomal subunit protein bS6 from Mannheimia succiniciproducens (strain KCTC 0769BP / MBEL55E).